The following is a 1222-amino-acid chain: BOS complex subunit NOMO3 (1222 aa).

Positions 1-31 are cleaved as a signal peptide; that stretch reads MLVGQGAGPLGPAVVTAAVVLLLSGVGPAHG. The Extracellular portion of the chain corresponds to 32–1155; the sequence is SEDIVVGCGG…NPTRKLPEQD (1124 aa). Residues N50, N218, and N618 are each glycosylated (N-linked (GlcNAc...) asparagine). The chain crosses the membrane as a helical span at residues 1156–1176; the sequence is IAQGSYIALPLTLLVLLAGYN. Topologically, residues 1177 to 1222 are cytoplasmic; it reads HDKLIPLLLQLTSRLQGVGALGQAASDNSGPEDAKRQAKKQKTRRT. Positions 1198-1222 are disordered; it reads GQAASDNSGPEDAKRQAKKQKTRRT. Residues 1213 to 1222 are compositionally biased toward basic residues; sequence QAKKQKTRRT.

In terms of assembly, component of the back of Sec61 (BOS) complex, composed of NCLN/Nicalin, NOMO (NOMO1, NOMO2 or NOMO3) and TMEM147. The BOS complex is part of the multi-pass translocon (MPT) complex, composed of three subcomplexes, the GEL complex (composed of RAB5IF/OPTI and TMCO1), the BOS complex (composed of NCLN/Nicalin, NOMO and TMEM147) and the PAT complex (composed of WDR83OS/Asterix and CCDC47). The MPT complex associates with the SEC61 complex. Due to the strong similarity between NOMO1, NOMO2 and NOMO3, similar interaction pattern probably occur for the three gene copies.

The protein resides in the endoplasmic reticulum membrane. In terms of biological role, component of the multi-pass translocon (MPT) complex that mediates insertion of multi-pass membrane proteins into the lipid bilayer of membranes. The MPT complex takes over after the SEC61 complex: following membrane insertion of the first few transmembrane segments of proteins by the SEC61 complex, the MPT complex occludes the lateral gate of the SEC61 complex to promote insertion of subsequent transmembrane regions. In Homo sapiens (Human), this protein is BOS complex subunit NOMO3 (NOMO3).